We begin with the raw amino-acid sequence, 73 residues long: Disintegrin molossin (73 aa).

The Disintegrin domain maps to 1-73 (EAGIECDCGS…ADCPRNRFHA (73 aa)). 6 cysteine pairs are disulfide-bonded: cysteine 6/cysteine 21, cysteine 8/cysteine 16, cysteine 15/cysteine 38, cysteine 29/cysteine 35, cysteine 34/cysteine 59, and cysteine 47/cysteine 66. Residues 51–53 (RGD) carry the Cell attachment site motif.

It belongs to the venom metalloproteinase (M12B) family. P-II subfamily. P-IIa sub-subfamily. As to quaternary structure, monomer (disintegrin). In terms of tissue distribution, expressed by the venom gland.

It is found in the secreted. Its function is as follows. Inhibits fibrinogen interaction with platelets. Acts by binding to alpha-IIb/beta-3 (ITGA2B/ITGB3) on the platelet surface and inhibits aggregation induced by ADP, thrombin, platelet-activating factor and collagen. This chain is Disintegrin molossin, found in Crotalus molossus molossus (Northern black-tailed rattlesnake).